A 101-amino-acid polypeptide reads, in one-letter code: Urease subunit beta (101 aa).

The protein belongs to the urease beta subunit family. Heterotrimer of UreA (gamma), UreB (beta) and UreC (alpha) subunits. Three heterotrimers associate to form the active enzyme.

It localises to the cytoplasm. The catalysed reaction is urea + 2 H2O + H(+) = hydrogencarbonate + 2 NH4(+). The protein operates within nitrogen metabolism; urea degradation; CO(2) and NH(3) from urea (urease route): step 1/1. This is Urease subunit beta from Rhizobium johnstonii (strain DSM 114642 / LMG 32736 / 3841) (Rhizobium leguminosarum bv. viciae).